We begin with the raw amino-acid sequence, 55 residues long: Conotoxin Cal6.40 (55 aa).

An N-terminal signal peptide occupies residues 1–21; sequence MSGSGVLLLTLLLLVPLSALA. Disulfide bonds link C24–C36, C29–C41, and C35–C50.

As to expression, expressed by the venom duct.

The protein localises to the secreted. Functionally, probable neurotoxin. The chain is Conotoxin Cal6.40 from Californiconus californicus (California cone).